Consider the following 297-residue polypeptide: MATLLSVRRARWRDYLELTKPKVVVLMLITSLAGMFLATRAGVSWSVLLFGNLGIGLCAGGAAVVNHVVDRRIDALMARTHKRPLAQGRVEPLPALLFALALALLGMVLLLVFTNALTAWLTLASLLGYAVLYTGFLKRATPQNIVIGGLAGAAPPLLGWVAVSGHVSAEPLLLVLIIFAWTPPHFWALAIHRKEEYAKADIPMLPVTHGERYTKLHILLYTLILLAVSLLPYAIHMSGPLYLACALGLGLRFLHWAWVLYRSSRPHAAIGTFKYSIGYLFALFIALLLDHYLLLSL.

9 helical membrane passes run 23 to 43 (VVVL…RAGV), 45 to 65 (WSVL…AAVV), 93 to 113 (LPAL…LLVF), 117 to 137 (LTAW…TGFL), 145 to 165 (IVIG…AVSG), 171 to 191 (PLLL…ALAI), 216 to 236 (LHIL…YAIH), 241 to 261 (LYLA…WVLY), and 277 to 297 (IGYL…LLSL).

This sequence belongs to the UbiA prenyltransferase family. Protoheme IX farnesyltransferase subfamily.

It localises to the cell inner membrane. It carries out the reaction heme b + (2E,6E)-farnesyl diphosphate + H2O = Fe(II)-heme o + diphosphate. It functions in the pathway porphyrin-containing compound metabolism; heme O biosynthesis; heme O from protoheme: step 1/1. Functionally, converts heme B (protoheme IX) to heme O by substitution of the vinyl group on carbon 2 of heme B porphyrin ring with a hydroxyethyl farnesyl side group. The chain is Protoheme IX farnesyltransferase 1 from Pseudomonas putida (strain ATCC 700007 / DSM 6899 / JCM 31910 / BCRC 17059 / LMG 24140 / F1).